The primary structure comprises 166 residues: Early E3 18.5 kDa glycoprotein (166 aa).

The N-terminal stretch at 1-19 (MGPILVLLVLLSLLEPGSA) is a signal peptide. The Lumenal segment spans residues 20–131 (NYDPCLDFDP…SKDNIVTFSI (112 aa)). Asparagine 31 carries N-linked (GlcNAc...) asparagine; by host glycosylation. 2 disulfide bridges follow: cysteine 32-cysteine 50 and cysteine 44-cysteine 106. Residues asparagine 63, asparagine 67, and asparagine 97 are each glycosylated (N-linked (GlcNAc...) asparagine; by host). A helical membrane pass occupies residues 132–152 (AYCLCACLLTALLCVCIHLLV). The Cytoplasmic segment spans residues 153–166 (TTRIKNANNKEKMP). Residues 162–166 (KEKMP) carry the Di-lysine motif motif.

It belongs to the adenoviridae E19 family. In terms of processing, both disulfide bonds are absolutely critical for the interaction with MHC antigens. Post-translationally, N-glycosylated; high-mannose.

It is found in the host endoplasmic reticulum membrane. Its function is as follows. Binds and retains class I heavy chains in the endoplasmic reticulum during the early period of virus infection, thereby impairing their transport to the cell surface. Also delays the expression of class I alleles that it cannot affect by direct retention. Binds transporters associated with antigen processing (TAP) and acts as a tapasin inhibitor, preventing class I/TAP association. In consequence, infected cells are masked for immune recognition by cytotoxic T-lymphocytes. The polypeptide is Early E3 18.5 kDa glycoprotein (Human adenovirus B serotype 11 (strain Slobiski) (HAdV-11)).